The chain runs to 348 residues: UDP-N-acetyl-alpha-D-glucosaminouronate 4-epimerase (348 aa).

Positions 26, 27, 46, 50, 51, 77, 78, 97, 165, 169, and 195 each coordinate NAD(+). Tyr165 (proton acceptor) is an active-site residue.

Belongs to the NAD(P)-dependent epimerase/dehydratase family. As to quaternary structure, homodimer. Requires NAD(+) as cofactor.

The catalysed reaction is UDP-2-acetamido-2-deoxy-alpha-D-glucuronate = UDP-2-acetamido-2-deoxy-alpha-D-galacturonate. It carries out the reaction UDP-N-acetyl-alpha-D-glucosamine = UDP-N-acetyl-alpha-D-galactosamine. The protein operates within capsule biogenesis; capsule polysaccharide biosynthesis. It functions in the pathway glycan metabolism; Vi-antigen biosynthesis. In terms of biological role, epimerase required for the biosynthesis of the capsular polysaccharide, commonly referred as the Vi antigen, an important virulence factor. Catalyzes the reversible epimerization of UDP-N-acetylglucosaminuronic acid (UDP-GlcNAcA) to UDP-N-acetylgalactosaminuronic acid (UDP-GalNAcA). Also catalyzes, with lower efficiency, the reversible epimerization of UDP-N-acetylglucosamine (UDP-GlcNAc) to UDP-N-acetylgalactosamine (UDP-GalNAc). Cannot use UDP-glucose (UDP-Glc) and UDP-galactose (UDP-Gal) as substrates. This Salmonella typhi protein is UDP-N-acetyl-alpha-D-glucosaminouronate 4-epimerase.